Here is a 268-residue protein sequence, read N- to C-terminus: Tryptophan synthase alpha chain (268 aa).

Active-site proton acceptor residues include glutamate 49 and aspartate 60.

It belongs to the TrpA family. In terms of assembly, tetramer of two alpha and two beta chains.

The enzyme catalyses (1S,2R)-1-C-(indol-3-yl)glycerol 3-phosphate + L-serine = D-glyceraldehyde 3-phosphate + L-tryptophan + H2O. Its pathway is amino-acid biosynthesis; L-tryptophan biosynthesis; L-tryptophan from chorismate: step 5/5. Functionally, the alpha subunit is responsible for the aldol cleavage of indoleglycerol phosphate to indole and glyceraldehyde 3-phosphate. This Pseudomonas aeruginosa (strain LESB58) protein is Tryptophan synthase alpha chain.